Consider the following 263-residue polypeptide: Protein STK_14130 (263 aa).

Belongs to the CinA family.

This is Protein STK_14130 from Sulfurisphaera tokodaii (strain DSM 16993 / JCM 10545 / NBRC 100140 / 7) (Sulfolobus tokodaii).